Consider the following 534-residue polypeptide: Dolichol kinase (534 aa).

At 1–16 (MTRQCPPQESGAALSG) the chain is on the cytoplasmic side. The chain crosses the membrane as a helical span at residues 17-37 (SVLAEAAVVFAVVLSIHAAVW). Residues 38–72 (DRYSWCAVALAVQAFYVQYKWDRLLQQGNAVFQFR) are Extracellular-facing. A helical transmembrane segment spans residues 73 to 93 (MSANSGLLPASMVMPLLGLVM). Residues 94-109 (KERCQTAGNPYFERFG) are Cytoplasmic-facing. A helical membrane pass occupies residues 110–130 (IVVAATGMAVALFSSVLALGI). Residues 131-132 (TR) are Extracellular-facing. The helical transmembrane segment at 133-153 (PVPTNTCAISGLAGGVIIYIM) threads the bilayer. At 154-161 (RHSLSVGE) the chain is on the cytoplasmic side. A helical transmembrane segment spans residues 162–182 (VIEVLEVLLIFVYLNMILLYL). At 183–186 (LPRC) the chain is on the extracellular side. Residues 187 to 207 (FTPGEALLVLGGISFVLNQLI) traverse the membrane as a helical segment. Residues 208 to 220 (KRSLTESQGDPVD) lie on the Cytoplasmic side of the membrane. The helical transmembrane segment at 221-241 (FFLLVVVVGMVLMGVFFSTLF) threads the bilayer. The Extracellular portion of the chain corresponds to 242–252 (VFMDSGTWASS). The chain crosses the membrane as a helical span at residues 253-273 (IFFHLMTCVLGLGVVLPWLHW). Residues 274 to 293 (LIRRNPLLWLLQFLFYTETR) lie on the Cytoplasmic side of the membrane. The helical transmembrane segment at 294–314 (IYLLAYWSLLASVACLVVLYQ) threads the bilayer. Residues 315 to 333 (NAKRSSSESKKHRAPTITR) are Extracellular-facing. A helical membrane pass occupies residues 334–350 (KYFHFIVVATYIPGIIF). At 351-355 (DRPLL) the chain is on the cytoplasmic side. Residues 356–376 (YVAATVCLAVFIFLEYVRYFR) form a helical membrane-spanning segment. The Extracellular segment spans residues 377 to 397 (IKPLGHTLRSLLSLFLDERDS). A helical membrane pass occupies residues 398–418 (GPLILTHIYLLLGMSLPIWLI). The Cytoplasmic segment spans residues 419–432 (PRPCTQKDSLEGAR). Residues 433–453 (ALVPYAGVLAVGVGDTVASIF) form a helical membrane-spanning segment. The Extracellular segment spans residues 454-468 (GSTMGEIRWPGTKKT). The tract at residues 455–470 (STMGEIRWPGTKKTFE) is CTP-binding. A helical transmembrane segment spans residues 469-489 (FEGTMTSIFAQIISVALILIF). The Cytoplasmic segment spans residues 490 to 491 (DS). Residues 492 to 512 (GVDLNYSYAWILGSISTVSLL) traverse the membrane as a helical segment. The Extracellular portion of the chain corresponds to 513–534 (EAYTTQIDNLLLPLYLLILLMA).

It belongs to the polyprenol kinase family.

Its subcellular location is the endoplasmic reticulum membrane. It carries out the reaction a di-trans,poly-cis-dolichol + CTP = a di-trans,poly-cis-dolichyl phosphate + CDP + H(+). It functions in the pathway protein modification; protein glycosylation. Functionally, catalyzes CTP-mediated phosphorylation of dolichol, the terminal step in de novo dolichyl monophosphate (Dol-P) biosynthesis. Dol-P is a lipid carrier essential for the synthesis of N-linked and O-linked oligosaccharides and for GPI anchors. The sequence is that of Dolichol kinase from Mus musculus (Mouse).